A 528-amino-acid chain; its full sequence is Glucose-6-phosphate isomerase (528 aa).

Catalysis depends on E322, which acts as the Proton donor. Residues H351 and K455 contribute to the active site.

Belongs to the GPI family.

Its subcellular location is the cytoplasm. The enzyme catalyses alpha-D-glucose 6-phosphate = beta-D-fructose 6-phosphate. It functions in the pathway carbohydrate biosynthesis; gluconeogenesis. Its pathway is carbohydrate degradation; glycolysis; D-glyceraldehyde 3-phosphate and glycerone phosphate from D-glucose: step 2/4. Functionally, catalyzes the reversible isomerization of glucose-6-phosphate to fructose-6-phosphate. The sequence is that of Glucose-6-phosphate isomerase from Synechococcus elongatus (strain ATCC 33912 / PCC 7942 / FACHB-805) (Anacystis nidulans R2).